A 404-amino-acid polypeptide reads, in one-letter code: Cysteine--tRNA ligase (404 aa).

Residue cysteine 14 coordinates Zn(2+). Positions 16-26 (PTVYSDVHIGN) match the 'HIGH' region motif. The Zn(2+) site is built by cysteine 190, histidine 216, and glutamate 220. Positions 248 to 252 (KMAKS) match the 'KMSKS' region motif. Lysine 251 contributes to the ATP binding site.

Belongs to the class-I aminoacyl-tRNA synthetase family. In terms of assembly, monomer. It depends on Zn(2+) as a cofactor.

The protein resides in the cytoplasm. The catalysed reaction is tRNA(Cys) + L-cysteine + ATP = L-cysteinyl-tRNA(Cys) + AMP + diphosphate. The polypeptide is Cysteine--tRNA ligase (Mesomycoplasma hyopneumoniae (strain 232) (Mycoplasma hyopneumoniae)).